Here is a 1418-residue protein sequence, read N- to C-terminus: Sterol 3-beta-glucosyltransferase (1418 aa).

Over residues 1–16 (MRPFLDDAKRRVDRKL) the composition is skewed to basic and acidic residues. Disordered stretches follow at residues 1–59 (MRPF…SREG), 83–188 (ARFD…RSAT), and 207–233 (LKASSTERSQPSLDESGEKGPRGASVS). A compositionally biased stretch (polar residues) spans 18–28 (ASRQSLSTSRL). Basic and acidic residues-rich tracts occupy residues 35–44 (DRLKDNHDAQ) and 95–105 (SEQRPRKESSV). A compositionally biased stretch (polar residues) spans 106–115 (RKGTSASANT). A compositionally biased stretch (low complexity) spans 116–126 (SSPLDSSQRSS). 2 stretches are compositionally biased toward basic and acidic residues: residues 127–139 (SRTDGKSEKESGT) and 147–166 (TISDHKLFRPFESNSKHEPQ). A compositionally biased stretch (polar residues) spans 209 to 219 (ASSTERSQPSL). One can recognise a GRAM 1 domain in the interval 249–288 (EKVLVEYACSLLQSILLQGYMYVTEGHICFYAYLPKKSTV). The PH domain maps to 289 to 387 (AIKSGYLYKR…WVKALQKVIF (99 aa)). The tract at residues 462–651 (ISSQHLSPQP…DPTKSFSGAP (190 aa)) is disordered. Over residues 486–497 (RWSLTSGTSRVL) the composition is skewed to polar residues. Over residues 508–519 (ASASTSHTSLAH) the composition is skewed to low complexity. The span at 534-575 (SESILNSFEQGTESSAAWQSMTDAAESASQILNRSDVFQSPT) shows a compositional bias: polar residues. Residues 578-598 (GLDRRPSGGERRGRRNSDETA) show a composition bias toward basic and acidic residues. Over residues 599–612 (RSLSTRANVGTGQQ) the composition is skewed to polar residues. A compositionally biased stretch (basic and acidic residues) spans 615–633 (ELGRRMDGDTSGREARDST). A compositionally biased stretch (polar residues) spans 635–651 (ESDQYTQDPTKSFSGAP). The GRAM 2 domain maps to 733 to 799 (DRFRAHFALP…RDIENVEKEK (67 aa)). UDP-alpha-D-glucose-binding residues include S920, R921, D923, A1223, H1225, H1238, G1242, T1243, D1262, and Q1263. The tract at residues 1339–1418 (SIASSTPFSP…SGPGRKLSGR (80 aa)) is disordered. Residues 1341-1355 (ASSTPFSPTPSAKTT) are compositionally biased toward low complexity. Acidic residues predominate over residues 1358–1379 (QDADDDVEDSEEWTFVGDDTDM). Residues 1380 to 1391 (EMSRRLRDRAIS) are compositionally biased toward basic and acidic residues.

It belongs to the glycosyltransferase 28 family.

The protein localises to the cytoplasm. Its subcellular location is the preautophagosomal structure membrane. It catalyses the reaction a sterol + UDP-alpha-D-glucose = a sterol 3-beta-D-glucoside + UDP + H(+). The enzyme catalyses ergosterol + UDP-alpha-D-glucose = ergosteryl 3-beta-D-glucoside + UDP + H(+). Its function is as follows. Sterol glycosyltransferase responsible for the glycosylation of ergosterol to form ergosterol-glucoside. In Neosartorya fischeri (strain ATCC 1020 / DSM 3700 / CBS 544.65 / FGSC A1164 / JCM 1740 / NRRL 181 / WB 181) (Aspergillus fischerianus), this protein is Sterol 3-beta-glucosyltransferase.